Reading from the N-terminus, the 193-residue chain is Phosphoheptose isomerase (193 aa).

Residues 37–193 (LAASFKADGK…QLIEKEMASV (157 aa)) form the SIS domain. 52–54 (NGG) contributes to the substrate binding site. Histidine 61 and glutamate 65 together coordinate Zn(2+). Residues glutamate 65, 93–94 (ND), 119–121 (STS), serine 124, and glutamine 172 contribute to the substrate site. Residues glutamine 172 and histidine 180 each coordinate Zn(2+).

Belongs to the SIS family. GmhA subfamily. As to quaternary structure, homotetramer. Zn(2+) is required as a cofactor.

It is found in the cytoplasm. It catalyses the reaction 2 D-sedoheptulose 7-phosphate = D-glycero-alpha-D-manno-heptose 7-phosphate + D-glycero-beta-D-manno-heptose 7-phosphate. It participates in carbohydrate biosynthesis; D-glycero-D-manno-heptose 7-phosphate biosynthesis; D-glycero-alpha-D-manno-heptose 7-phosphate and D-glycero-beta-D-manno-heptose 7-phosphate from sedoheptulose 7-phosphate: step 1/1. Catalyzes the isomerization of sedoheptulose 7-phosphate in D-glycero-D-manno-heptose 7-phosphate. This is Phosphoheptose isomerase from Edwardsiella ictaluri (strain 93-146).